The chain runs to 287 residues: Bifunctional protein FolD (287 aa).

Residues 166–168 and isoleucine 232 each bind NADP(+); that span reads GAS.

The protein belongs to the tetrahydrofolate dehydrogenase/cyclohydrolase family. As to quaternary structure, homodimer.

The enzyme catalyses (6R)-5,10-methylene-5,6,7,8-tetrahydrofolate + NADP(+) = (6R)-5,10-methenyltetrahydrofolate + NADPH. It carries out the reaction (6R)-5,10-methenyltetrahydrofolate + H2O = (6R)-10-formyltetrahydrofolate + H(+). It functions in the pathway one-carbon metabolism; tetrahydrofolate interconversion. Catalyzes the oxidation of 5,10-methylenetetrahydrofolate to 5,10-methenyltetrahydrofolate and then the hydrolysis of 5,10-methenyltetrahydrofolate to 10-formyltetrahydrofolate. This chain is Bifunctional protein FolD, found in Buchnera aphidicola subsp. Baizongia pistaciae (strain Bp).